The following is a 433-amino-acid chain: Ligand-dependent corepressor (433 aa).

Positions 1–147 (MQRMIQQFAA…GTREGFGHST (147 aa)) are disordered. Positions 13 to 34 (TSKTSSTQDPSQPNSTKNQSLP) are enriched in polar residues. Over residues 36–48 (ASPVTTSPTAATT) the composition is skewed to low complexity. S42 bears the Phosphoserine mark. The Interaction with nuclear receptors signature appears at 53-57 (LSKLL). A Phosphoserine modification is found at S63. Over residues 88–110 (KKSPCASSTSLSHSPGCSSTQGN) the composition is skewed to polar residues. S249 is modified (phosphoserine). K254 participates in a covalent cross-link: Glycyl lysine isopeptide (Lys-Gly) (interchain with G-Cter in SUMO2). The segment at 299-348 (QNRKSMLDAGPDSWGSDAEQSTSGQPYPTSDQEGDPGSKQPRKKRGRYRQ) is disordered. Positions 316–329 (AEQSTSGQPYPTSD) are enriched in polar residues. A Nuclear localization signal motif is present at residues 339 to 345 (PRKKRGR). The HTH psq-type domain maps to 340–392 (RKKRGRYRQYNSEILEEAISVVMSGKMSVSKAQSIYGIPHSTLEYKVKERLGT). Positions 368-388 (VSKAQSIYGIPHSTLEYKVKE) form a DNA-binding region, H-T-H motif. Residues 393 to 412 (LKNPPKKKMKLMRSEGPDVS) form a disordered region. A Glycyl lysine isopeptide (Lys-Gly) (interchain with G-Cter in SUMO2) cross-link involves residue K414.

As to quaternary structure, interacts with ESR1 and ESR2 in the presence of estradiol. Interacts with CTBP1, HDAC3 and HDAC6. Component of a large corepressor complex that contains about 20 proteins, including CTBP1, CTBP2, HDAC1 and HDAC2. In terms of tissue distribution, detected in heart and kidney.

Its subcellular location is the nucleus. In terms of biological role, repressor of ligand-dependent transcription activation by various nuclear repressors. Repressor of ligand-dependent transcription activation by ESR1, ESR2, NR3C1, PGR, RARA, RARB, RARG, RXRA and VDR. May act as transcription activator that binds DNA elements with the sequence 5'-CCCTATCGATCGATCTCTACCT-3'. The chain is Ligand-dependent corepressor (Lcor) from Mus musculus (Mouse).